Here is a 147-residue protein sequence, read N- to C-terminus: Large ribosomal subunit protein uL15 (147 aa).

The span at 1–15 shows a compositional bias: basic and acidic residues; it reads MKLHELKPAKGAVKE. Positions 1–47 are disordered; sequence MKLHELKPAKGAVKEVKRKGRGRATGNGKTAGRGHNGQNSRSGGGVR. The span at 23–35 shows a compositional bias: gly residues; sequence RATGNGKTAGRGH.

It belongs to the universal ribosomal protein uL15 family. Part of the 50S ribosomal subunit.

Its function is as follows. Binds to the 23S rRNA. The protein is Large ribosomal subunit protein uL15 of Alkaliphilus metalliredigens (strain QYMF).